A 193-amino-acid polypeptide reads, in one-letter code: Ribosomal RNA small subunit methyltransferase G (193 aa).

S-adenosyl-L-methionine-binding positions include G64, L69, 113 to 114 (IE), and R126.

It belongs to the methyltransferase superfamily. RNA methyltransferase RsmG family.

The protein resides in the cytoplasm. The catalysed reaction is guanosine(527) in 16S rRNA + S-adenosyl-L-methionine = N(7)-methylguanosine(527) in 16S rRNA + S-adenosyl-L-homocysteine. Functionally, specifically methylates the N7 position of guanine in position 527 of 16S rRNA. In Rickettsia massiliae (strain Mtu5), this protein is Ribosomal RNA small subunit methyltransferase G.